The primary structure comprises 100 residues: Large ribosomal subunit protein bL21 (100 aa).

The protein belongs to the bacterial ribosomal protein bL21 family. As to quaternary structure, part of the 50S ribosomal subunit. Contacts protein L20.

In terms of biological role, this protein binds to 23S rRNA in the presence of protein L20. The sequence is that of Large ribosomal subunit protein bL21 from Corynebacterium urealyticum (strain ATCC 43042 / DSM 7109).